Reading from the N-terminus, the 479-residue chain is MTFREKMPTSPKSPLRRRRSSWTGTWLNHQTTSFKQAVSAVIQAQSPRSRFKSLSSDFSDVDRTLSLSDSLLLKILEKLPESQNEDVSLVCKRWLSVQGRRLRSMKVFDWEFLLSGRLVSRFPKLTSVDLVNACFNPSSNSGILLCHTSISFHVSTDSSLNLNFVEESLLDNEMVDKGLRVLGRGSFDLIKLVVINATELGLLSLAEDCSDLQELELHKCSDNLLRGIAACENLRGLRLVGSVDGLYSSSVSDIGLTILAQGCKRLVKLELSGCEGSFDGIKAIGQCCEVLEELSICDHRMDDGWIAALSYFESLKTLLISSCRKIDSSPGPGKLLGSCPALESLQLRRCCLNDKEGMRALFKVCDGVTKVNIQDCWGLDDDSFSLAKAFRRVRFLSLEGCSILTTSGLESVILHWEELESMRVVSCKNIKDSEISAALSSLFSLLKELTWRPDTRSHLSSSLEGTGIGKRGSKFFKKR.

Positions 1 to 20 (MTFREKMPTSPKSPLRRRRS) are disordered. An F-box domain is found at 62-108 (DRTLSLSDSLLLKILEKLPESQNEDVSLVCKRWLSVQGRRLRSMKVF).

The protein is F-box protein At5g51380 of Arabidopsis thaliana (Mouse-ear cress).